Reading from the N-terminus, the 430-residue chain is Tektin-2 (430 aa).

Coiled-coil stretches lie at residues 75 to 162 and 226 to 380; these read KETL…FQHL and KNRA…IACK.

This sequence belongs to the tektin family. Microtubule inner protein component of sperm flagellar doublet microtubules. May interact with CCDC172. Ubiquitinated, leading to its degradation. Deubiquitinated by USP16, promoting its stability. In terms of processing, tyrosine phosphorylated. Expressed in the testes (at protein level).

The protein resides in the cytoplasm. It localises to the cytoskeleton. It is found in the cilium axoneme. The protein localises to the flagellum axoneme. Its subcellular location is the microtubule organizing center. In terms of biological role, microtubule inner protein (MIP) part of the dynein-decorated doublet microtubules (DMTs) in cilia and flagellar axoneme. Plays a key role in the assembly or attachment of the inner dynein arm to microtubules in sperm flagella and tracheal cilia. Forms filamentous polymers in the walls of ciliary and flagellar microtubules. This is Tektin-2 (Tekt2) from Mus musculus (Mouse).